Reading from the N-terminus, the 306-residue chain is Oligopeptide transport system permease protein OppB (306 aa).

Residues 1–8 lie on the Cytoplasmic side of the membrane; the sequence is MLKFIFKR. Residues 9 to 29 form a helical membrane-spanning segment; the sequence is LLEALPTLFILITFSFFLMRL. Residues 30–99 lie on the Periplasmic side of the membrane; it reads APGSPFTSER…IASAFPVSIK (70 aa). An ABC transmembrane type-1 domain is found at 94 to 293; sequence FPVSIKLGMV…TLTILFNAIV (200 aa). The chain crosses the membrane as a helical span at residues 100 to 120; the sequence is LGMVAFAFAVVLGVTAGTLAA. The Cytoplasmic portion of the chain corresponds to 121-135; the sequence is LNQNSRWDYILMSFS. The helical transmembrane segment at 136 to 156 threads the bilayer; sequence MLGVIMPSFVFAPVLVLIFAI. The Periplasmic portion of the chain corresponds to 157–169; it reads YLGWLPAGGWNGG. The chain crosses the membrane as a helical span at residues 170–190; that stretch reads TAMYMILPVASLTIAYVAGIA. Residues 191 to 229 lie on the Cytoplasmic side of the membrane; it reads RIMRGSMIEVLHSNFIRTAKAKGLSMSRIILKHALRPAL. Residues 230–250 traverse the membrane as a helical segment; it reads LPVITYLGPAFVGIITGSMVI. Over 251 to 279 the chain is Periplasmic; that stretch reads ESVFGLPGMGLLFVNGALNRDYSLVLSLT. A helical transmembrane segment spans residues 280-300; sequence ILVGTLTILFNAIVDILYAII. Topologically, residues 301–306 are cytoplasmic; the sequence is DPKIRY.

The protein belongs to the binding-protein-dependent transport system permease family. OppBC subfamily. As to quaternary structure, the complex is composed of two ATP-binding proteins (OppD and OppF), two transmembrane proteins (OppB and OppC) and a solute-binding protein (OppA).

The protein localises to the cell inner membrane. In terms of biological role, part of the ABC transporter complex OppABCDF involved in the uptake of oligopeptides. Probably responsible for the translocation of the substrate across the membrane. The protein is Oligopeptide transport system permease protein OppB (oppB) of Haemophilus influenzae (strain ATCC 51907 / DSM 11121 / KW20 / Rd).